The following is a 284-amino-acid chain: Nucleotide-binding protein NMC0691 (284 aa).

ATP is bound at residue 8–15; the sequence is GLSGSGKS. A GTP-binding site is contributed by 58–61; it reads DVRS.

The protein belongs to the RapZ-like family.

Functionally, displays ATPase and GTPase activities. The chain is Nucleotide-binding protein NMC0691 from Neisseria meningitidis serogroup C / serotype 2a (strain ATCC 700532 / DSM 15464 / FAM18).